Reading from the N-terminus, the 506-residue chain is Peptidyl-prolyl cis-trans isomerase CYP59 (506 aa).

The PPIase cyclophilin-type domain occupies 1-161 (MSVLIVTSLG…KNIRIKHTHI (161 aa)). Residues 243-321 (NVLFVCKLNP…RRIHVDFSQS (79 aa)) form the RRM domain. A CCHC-type zinc finger spans residues 341 to 357 (GCFKCGSTDHIAKDCVG). Composition is skewed to basic and acidic residues over residues 388–404 (ETPK…EKIQ) and 412–506 (GEGK…RRDR). Residues 388-506 (ETPKHNSHER…REARHERRDR (119 aa)) form a disordered region.

This sequence belongs to the cyclophilin-type PPIase family. As to quaternary structure, component of the BZR1 complex. Interacts with NRPB1 (via CTD domain), SCL28, SCL30, SCL30A, SCL33, SC35, SR30, SR34, RSZ21, RS2Z33, RS31 and RS40. Ubiquitous.

Its subcellular location is the nucleus. It carries out the reaction [protein]-peptidylproline (omega=180) = [protein]-peptidylproline (omega=0). Functionally, PPIases accelerate the folding of proteins. It catalyzes the cis-trans isomerization of proline imidic peptide bonds in oligopeptides. Influences somehow regulation of RNA pol II (CTD) phosphorylation. Binds RNA with preferences for GC-rich sequences. Probably involved in activities connecting transcription and pre-mRNA processing. Involved in brassinostroid response. This is Peptidyl-prolyl cis-trans isomerase CYP59 (CYP59) from Arabidopsis thaliana (Mouse-ear cress).